The sequence spans 649 residues: Macrolide export ATP-binding/permease protein MacB 1 (649 aa).

The region spanning 5 to 243 is the ABC transporter domain; the sequence is LELEGIRRSY…AAAELMSLTP (239 aa). 41–48 is an ATP binding site; sequence GASGSGKS. 5 helical membrane passes run 274 to 294, 420 to 440, 524 to 544, 578 to 598, and 608 to 628; these read ALTM…LVVG, VVGQ…VVAE, LFLT…VMNI, VLVC…IGLI, and IAFP…IGVV.

This sequence belongs to the ABC transporter superfamily. Macrolide exporter (TC 3.A.1.122) family. Homodimer. Part of the tripartite efflux system MacAB-TolC, which is composed of an inner membrane transporter, MacB, a periplasmic membrane fusion protein, MacA, and an outer membrane component, TolC. The complex forms a large protein conduit and can translocate molecules across both the inner and outer membranes. Interacts with MacA.

It localises to the cell inner membrane. Part of the tripartite efflux system MacAB-TolC. MacB is a non-canonical ABC transporter that contains transmembrane domains (TMD), which form a pore in the inner membrane, and an ATP-binding domain (NBD), which is responsible for energy generation. Confers resistance against macrolides. This chain is Macrolide export ATP-binding/permease protein MacB 1, found in Yersinia pestis bv. Antiqua (strain Antiqua).